A 254-amino-acid chain; its full sequence is Undecaprenyl-diphosphatase (254 aa).

Transmembrane regions (helical) follow at residues 1–21, 41–61, 75–95, 96–116, 130–150, 174–194, 210–230, and 234–254; these read MGII…FLPV, AHKA…VFLY, LIIA…IIKG, LFSP…FIAV, ILKI…IAMI, AEFS…YDIM, TGFV…IGFV, and NFVP…LFVL.

The protein belongs to the UppP family.

It is found in the cell inner membrane. The enzyme catalyses di-trans,octa-cis-undecaprenyl diphosphate + H2O = di-trans,octa-cis-undecaprenyl phosphate + phosphate + H(+). Catalyzes the dephosphorylation of undecaprenyl diphosphate (UPP). Confers resistance to bacitracin. This is Undecaprenyl-diphosphatase from Persephonella marina (strain DSM 14350 / EX-H1).